A 223-amino-acid chain; its full sequence is PKHD-type hydroxylase CPS_3426 (223 aa).

The Fe2OG dioxygenase domain occupies 77-175 (KSMMPFIISE…RKVALTWIES (99 aa)). Fe cation contacts are provided by His96, Asp98, and His156. Arg166 contributes to the 2-oxoglutarate binding site.

The cofactor is Fe(2+). Requires L-ascorbate as cofactor.

The sequence is that of PKHD-type hydroxylase CPS_3426 from Colwellia psychrerythraea (strain 34H / ATCC BAA-681) (Vibrio psychroerythus).